A 285-amino-acid polypeptide reads, in one-letter code: Energy-coupling factor transporter ATP-binding protein EcfA2 (285 aa).

Residues 6–242 (LKVEELNYNY…KEVIRKVNLR (237 aa)) enclose the ABC transporter domain. 39-46 (GGNGVGKS) provides a ligand contact to ATP.

Belongs to the ABC transporter superfamily. Energy-coupling factor EcfA family. In terms of assembly, forms a stable energy-coupling factor (ECF) transporter complex composed of 2 membrane-embedded substrate-binding proteins (S component), 2 ATP-binding proteins (A component) and 2 transmembrane proteins (T component).

Its subcellular location is the cell membrane. Functionally, ATP-binding (A) component of a common energy-coupling factor (ECF) ABC-transporter complex. Unlike classic ABC transporters this ECF transporter provides the energy necessary to transport a number of different substrates. This is Energy-coupling factor transporter ATP-binding protein EcfA2 from Clostridium perfringens (strain SM101 / Type A).